Consider the following 337-residue polypeptide: Probable cytosolic iron-sulfur protein assembly protein Ciao1 (337 aa).

WD repeat units follow at residues 12–51, 58–97, 102–141, 147–186, 193–232, 251–290, and 301–337; these read GHRG…RWVA, GHSR…FECN, GHEN…EYEC, THTQ…SDWS, SHES…NEFG, YHSR…SPHE, and AHSQ…EPEE.

It belongs to the WD repeat CIA1 family.

Essential component of the cytosolic iron-sulfur (Fe/S) protein assembly machinery. Required for the maturation of extramitochondrial Fe/S proteins. The protein is Probable cytosolic iron-sulfur protein assembly protein Ciao1 of Aedes aegypti (Yellowfever mosquito).